A 438-amino-acid chain; its full sequence is tRNA modification GTPase MnmE (438 aa).

(6S)-5-formyl-5,6,7,8-tetrahydrofolate-binding residues include R21, E79, and K118. The TrmE-type G domain maps to 215-362; it reads GFSIVLIGAP…LEARIEQIVR (148 aa). N225 lines the K(+) pocket. GTP-binding positions include 225–230, 244–250, and 269–272; these read NAGKSS, TDIPGTT, and DTAG. S229 serves as a coordination point for Mg(2+). Positions 244, 246, and 249 each coordinate K(+). T250 contributes to the Mg(2+) binding site. A (6S)-5-formyl-5,6,7,8-tetrahydrofolate-binding site is contributed by K438.

Belongs to the TRAFAC class TrmE-Era-EngA-EngB-Septin-like GTPase superfamily. TrmE GTPase family. In terms of assembly, homodimer. Heterotetramer of two MnmE and two MnmG subunits. The cofactor is K(+).

It is found in the cytoplasm. Exhibits a very high intrinsic GTPase hydrolysis rate. Involved in the addition of a carboxymethylaminomethyl (cmnm) group at the wobble position (U34) of certain tRNAs, forming tRNA-cmnm(5)s(2)U34. This chain is tRNA modification GTPase MnmE, found in Maricaulis maris (strain MCS10) (Caulobacter maris).